The sequence spans 438 residues: tRNA modification GTPase MnmE (438 aa).

R20, E76, and K115 together coordinate (6S)-5-formyl-5,6,7,8-tetrahydrofolate. The region spanning N210–D370 is the TrmE-type G domain. N220 lines the K(+) pocket. Residues N220–T225, T239–T245, and D264–G267 each bind GTP. Residue S224 participates in Mg(2+) binding. K(+) contacts are provided by T239, I241, and T244. T245 contacts Mg(2+). K438 contacts (6S)-5-formyl-5,6,7,8-tetrahydrofolate.

It belongs to the TRAFAC class TrmE-Era-EngA-EngB-Septin-like GTPase superfamily. TrmE GTPase family. In terms of assembly, homodimer. Heterotetramer of two MnmE and two MnmG subunits. K(+) is required as a cofactor.

The protein localises to the cytoplasm. Exhibits a very high intrinsic GTPase hydrolysis rate. Involved in the addition of a carboxymethylaminomethyl (cmnm) group at the wobble position (U34) of certain tRNAs, forming tRNA-cmnm(5)s(2)U34. This is tRNA modification GTPase MnmE from Carsonella ruddii (strain PV).